The following is a 204-amino-acid chain: Recombination protein RecR (204 aa).

The C4-type zinc-finger motif lies at cysteine 63 to cysteine 78. The region spanning asparagine 86–proline 181 is the Toprim domain.

Belongs to the RecR family.

May play a role in DNA repair. It seems to be involved in an RecBC-independent recombinational process of DNA repair. It may act with RecF and RecO. This is Recombination protein RecR from Dehalococcoides mccartyi (strain ATCC BAA-2266 / KCTC 15142 / 195) (Dehalococcoides ethenogenes (strain 195)).